A 398-amino-acid polypeptide reads, in one-letter code: Stearoyl-[acyl-carrier-protein] 9-desaturase, chloroplastic (398 aa).

Residues 1 to 34 (MALKLHHTAFNPSMAVTSSGLPRSYHLRSHRVFM) constitute a chloroplast transit peptide. Positions 46–66 (IPNAKKPHMPPREAHVQKTHS) are disordered. Fe cation is bound by residues E140, E178, H181, E231, E264, and H267.

This sequence belongs to the fatty acid desaturase type 2 family. As to quaternary structure, homodimer. It depends on Fe(2+) as a cofactor.

It is found in the plastid. Its subcellular location is the chloroplast. The catalysed reaction is octadecanoyl-[ACP] + 2 reduced [2Fe-2S]-[ferredoxin] + O2 + 2 H(+) = (9Z)-octadecenoyl-[ACP] + 2 oxidized [2Fe-2S]-[ferredoxin] + 2 H2O. The protein operates within lipid metabolism; fatty acid metabolism. Functionally, converts stearoyl-ACP to oleoyl-ACP by introduction of a cis double bond between carbons 9 and 10 of the acyl chain. The polypeptide is Stearoyl-[acyl-carrier-protein] 9-desaturase, chloroplastic (Simmondsia chinensis (Jojoba)).